A 196-amino-acid polypeptide reads, in one-letter code: Phosphoheptose isomerase (196 aa).

One can recognise an SIS domain in the interval 36–195 (VIQAYKLGKK…EKELFGEKVD (160 aa)). A substrate-binding site is contributed by 51 to 53 (NGG). Positions 60 and 64 each coordinate Zn(2+). Residues glutamate 64, 93–94 (ND), 119–121 (STS), serine 124, and glutamine 171 each bind substrate. Zn(2+) is bound by residues glutamine 171 and histidine 179.

Belongs to the SIS family. GmhA subfamily. Zn(2+) serves as cofactor.

It is found in the cytoplasm. It carries out the reaction 2 D-sedoheptulose 7-phosphate = D-glycero-alpha-D-manno-heptose 7-phosphate + D-glycero-beta-D-manno-heptose 7-phosphate. The protein operates within carbohydrate biosynthesis; D-glycero-D-manno-heptose 7-phosphate biosynthesis; D-glycero-alpha-D-manno-heptose 7-phosphate and D-glycero-beta-D-manno-heptose 7-phosphate from sedoheptulose 7-phosphate: step 1/1. In terms of biological role, catalyzes the isomerization of sedoheptulose 7-phosphate in D-glycero-D-manno-heptose 7-phosphate. The polypeptide is Phosphoheptose isomerase (Clostridium acetobutylicum (strain ATCC 824 / DSM 792 / JCM 1419 / IAM 19013 / LMG 5710 / NBRC 13948 / NRRL B-527 / VKM B-1787 / 2291 / W)).